The chain runs to 316 residues: tRNA dimethylallyltransferase (316 aa).

Residue 17 to 24 coordinates ATP; sequence GPTASGKT. 19–24 lines the substrate pocket; sequence TASGKT. Interaction with substrate tRNA regions lie at residues 42–45, 166–170, 247–252, and 280–287; these read DSAL, QRLSR, RCVGYR, and KRQITWLR.

It belongs to the IPP transferase family. As to quaternary structure, monomer. Requires Mg(2+) as cofactor.

It catalyses the reaction adenosine(37) in tRNA + dimethylallyl diphosphate = N(6)-dimethylallyladenosine(37) in tRNA + diphosphate. In terms of biological role, catalyzes the transfer of a dimethylallyl group onto the adenine at position 37 in tRNAs that read codons beginning with uridine, leading to the formation of N6-(dimethylallyl)adenosine (i(6)A). This Escherichia coli O6:K15:H31 (strain 536 / UPEC) protein is tRNA dimethylallyltransferase.